Reading from the N-terminus, the 422-residue chain is Testin (422 aa).

One can recognise a PET domain in the interval 92-199 (MILTSPVAAK…GDVKLPKEVE (108 aa)). The segment at 135 to 165 (QPVAGSEGAQYRKKQLAKQLPAHDQDPSKCH) is disordered. Positions 155–165 (PAHDQDPSKCH) are enriched in basic and acidic residues. 3 LIM zinc-binding domains span residues 234-299 (YYCF…SEKP), 300-359 (RCAG…NHAV), and 360-422 (SCQG…KMSS).

Belongs to the prickle / espinas / testin family. As to expression, expressed in the animal hemisphere at the 4-cell stage. By stage 18, expressed in cells adjacent to the anterior neural plate. In late neurula, expressed in the cranial neural crest. At tail bud stages, expressed strongly in the head, ventral to the developing eye, branchial arches and lateral line placodes. Also localized in the otic vesicle, dorsal fin and notochord with weaker expression at intersomitic junctions of tail bud embryos.

The protein localises to the cytoplasm. It localises to the cell cortex. Its subcellular location is the cell junction. It is found in the focal adhesion. In terms of biological role, scaffold protein that may play a role in cell adhesion, cell spreading and in the reorganization of the actin cytoskeleton. May inhibit cell growth. Regulates cranial neural crest migration. Acts together with prickle1 to control axial elongation. The protein is Testin of Xenopus laevis (African clawed frog).